The primary structure comprises 999 residues: MAELCRMDSTLTALDEEMLWDMLESHRCRIVQSICPSRLTPYLRQAKVLGQLDEEEILHSSRFTNSAMRVGHLLDLLKARGKNGAIAFLESLKFHNPDVYTLVTGLQSDIDFSTFSGLMETSKLTECLAGAISSLQEELAQEKAQKEVLLRRCQQLKERLGLAEAHAEGLRQLEVDHSRMKREVSTHFHEVLKLKDEMLNLSLHYSNALREKELAATRCHSLQEELYLVKQELQRASLVSSCERESRERSLKMASNLEPQGEELNRLKEENEKLRSMTFSLVEKDILEQSLDEARESKQELVDRIHSLRERAVAAERQQKQYWEEKEQTLLQFRKTQVDCELYKEKMTMLQGQVAELQKERDQAYTARDRAQMEISQRLVEKDALRRRVFELTEQVCELRTQLRRLQAEAPGGPKQEAGARELCLRGKQRLVRMHAVCPPDDSDCSLLSSTESRLWWDLNSTSSREQMDSFRSSSPMPPSQQSLYKRVAEDFLEDPESLSFPEVLEMRLQGATVDDTDTDLEFEMIDGADLSQTEDSLQGSSRSLNVSESSVPVRRRPARKILSQVTVLAFQGDALLEQIGVIGGNLTGIFIHRVTPGSAADEMALRPGTQIMMVDYKPTKPSLRATLENTTLEQAVGLLRRVNGSCYLSVKINTEGYKNLIQDLDAKVVTSGDSFYIRVNLAMQRGGDGELQTHCNDILHVTDTMFQGRSCWHAHHVNPYTMKDMEPGTIPNYSQAQQQLLALIQDMTQRCTVPRKPPGGPQKLVRIVSVDKAAVSPLTSSFDQSQWDSGKEEGGPSVCFWSESCFTLAPYTLVHPHRPARPRPVLFVPRLVGRILGKKLCLLQGFKQCSAEYLSQEEYATWSQRGDIIQEGESIGDHHWITRHAVESLMNMSTHALLDVRLDSVRVLHRMDMFPIIIHVSVNEKTAKKLRKGLHRLGSSEEQFLEVARQEEGELDRVPCLYSSLAPDSWSDLDSLLSCVRLAIADEQKKVVWTESPC.

One can recognise a CARD domain in the interval 15 to 107 (DEEMLWDMLE…DVYTLVTGLQ (93 aa)). The stretch at 125–411 (TECLAGAISS…QLRRLQAEAP (287 aa)) forms a coiled coil. The interval 409-565 (EAPGGPKQEA…RRPARKILSQ (157 aa)) is maintains the protein in an inactive state. S541 bears the Phosphoserine mark. Residues 572-655 (QGDALLEQIG…SCYLSVKINT (84 aa)) enclose the PDZ domain. Positions 803–986 (SESCFTLAPY…LLSCVRLAIA (184 aa)) constitute a Guanylate kinase-like domain.

As to quaternary structure, interacts (via CARD domain) with BCL10 (via CARD domain). Forms a complex with MALT1 and BCL10; resulting in the formation of a CBM (CARD14-BLC10-MALT1) complex. Interacts with TRAF2, TRAF3 and TRAF6.

The protein localises to the cytoplasm. Acts as a scaffolding protein that can activate the inflammatory transcription factor NF-kappa-B and p38/JNK MAP kinase signaling pathways. Forms a signaling complex with BCL10 and MALT1, and activates MALT1 proteolytic activity and inflammatory gene expression. MALT1 is indispensable for CARD14-induced activation of NF-kappa-B and p38/JNK MAP kinases. May play a role in signaling mediated by TRAF2, TRAF3 and TRAF6 and protects cells against apoptosis. The protein is Caspase recruitment domain-containing protein 14 (Card14) of Mus musculus (Mouse).